The following is a 377-amino-acid chain: Tryptophan 2,3-dioxygenase (377 aa).

Residues 57 to 61 (FIITH) and arginine 128 contribute to the substrate site. A heme-binding site is contributed by histidine 313. Threonine 328 lines the substrate pocket.

Belongs to the tryptophan 2,3-dioxygenase family. Homotetramer. Dimer of dimers. Heme is required as a cofactor.

The catalysed reaction is L-tryptophan + O2 = N-formyl-L-kynurenine. It participates in amino-acid degradation; L-tryptophan degradation via kynurenine pathway; L-kynurenine from L-tryptophan: step 1/2. The protein operates within pigment biosynthesis; ommochrome biosynthesis. Its function is as follows. Heme-dependent dioxygenase that catalyzes the oxidative cleavage of the L-tryptophan (L-Trp) pyrrole ring and converts L-tryptophan to N-formyl-L-kynurenine. Catalyzes the oxidative cleavage of the indole moiety. This chain is Tryptophan 2,3-dioxygenase, found in Drosophila grimshawi (Hawaiian fruit fly).